Consider the following 319-residue polypeptide: GTPase Era (319 aa).

The region spanning 9–196 (RSGVSLIIGR…MRTLRDLLPE (188 aa)) is the Era-type G domain. Positions 17–24 (GRPSSGKS) are G1. 17 to 24 (GRPSSGKS) lines the GTP pocket. Residues 43 to 47 (QTTRN) are G2. A G3 region spans residues 64–67 (DTPG). GTP-binding positions include 64–68 (DTPGY) and 127–130 (NKVD). Positions 127-130 (NKVD) are G4. The segment at 175–177 (ISA) is G5. The region spanning 227 to 303 (CRDELPHALY…HISLDIRVKV (77 aa)) is the KH type-2 domain.

It belongs to the TRAFAC class TrmE-Era-EngA-EngB-Septin-like GTPase superfamily. Era GTPase family. As to quaternary structure, monomer.

The protein resides in the cytoplasm. Its subcellular location is the cell inner membrane. An essential GTPase that binds both GDP and GTP, with rapid nucleotide exchange. Plays a role in 16S rRNA processing and 30S ribosomal subunit biogenesis and possibly also in cell cycle regulation and energy metabolism. The polypeptide is GTPase Era (Treponema pallidum (strain Nichols)).